The primary structure comprises 309 residues: Enoyl-CoA hydratase 2, peroxisomal (309 aa).

Residues 95–96 (HG), Lys124, 208–213 (DYNPLH), Gly231, and Phe261 contribute to the substrate site. One can recognise a MaoC-like domain in the interval 183–295 (PQRQPLTVCE…TKVKERNKTV (113 aa)). A Microbody targeting signal motif is present at residues 307–309 (SSL).

In terms of tissue distribution, ubiquitous.

Its subcellular location is the peroxisome. The catalysed reaction is a (3R)-3-hydroxyacyl-CoA = a (2E)-enoyl-CoA + H2O. It functions in the pathway lipid metabolism; fatty acid beta-oxidation. In terms of biological role, bidirectional monofunctional enoyl-CoA hydratase 2 involved in the degradation of even cis-unsaturated fatty acids. Devoid of 3-hydroxyacyl-CoA dehydrogenase activity. This Arabidopsis thaliana (Mouse-ear cress) protein is Enoyl-CoA hydratase 2, peroxisomal (ECH2).